A 551-amino-acid chain; its full sequence is 2,3-bisphosphoglycerate-independent phosphoglycerate mutase (551 aa).

Mn(2+) contacts are provided by D22 and S74. Catalysis depends on S74, which acts as the Phosphoserine intermediate. Residues H135, 165–166, R201, R208, and 281–284 contribute to the substrate site; these read RD and RGDR. Residue D319 coordinates Mn(2+). K356 contributes to the substrate binding site. Residues D424, H428, D465, H466, and H495 each coordinate Mn(2+).

It belongs to the BPG-independent phosphoglycerate mutase family. In terms of assembly, monomer. Requires Mn(2+) as cofactor.

The protein localises to the cytoplasm. The catalysed reaction is (2R)-2-phosphoglycerate = (2R)-3-phosphoglycerate. The protein operates within carbohydrate degradation; glycolysis; pyruvate from D-glyceraldehyde 3-phosphate: step 3/5. Functionally, catalyzes the interconversion of 2-phosphoglycerate (2-PGA) and 3-phosphoglycerate (3-PGA). This Trypanosoma brucei brucei (strain 927/4 GUTat10.1) protein is 2,3-bisphosphoglycerate-independent phosphoglycerate mutase.